A 221-amino-acid polypeptide reads, in one-letter code: Stromal cell-derived factor 2-like protein 1 (221 aa).

A signal peptide spans Met-1–Ala-28. MIR domains lie at Ala-33–Gly-87, Gly-95–Ser-150, and Gly-151–Gly-205. Ser-215 carries the post-translational modification Phosphoserine. The Prevents secretion from ER motif lies at His-218–Leu-221.

In terms of tissue distribution, ubiquitously expressed with high expression in the testis, ovary, uterus, and low expression in heart and skeletal muscle.

The protein resides in the endoplasmic reticulum lumen. This Mus musculus (Mouse) protein is Stromal cell-derived factor 2-like protein 1 (Sdf2l1).